The sequence spans 61 residues: Small ribosomal subunit protein uS14 (61 aa).

4 residues coordinate Zn(2+): Cys24, Cys27, Cys40, and Cys43.

Belongs to the universal ribosomal protein uS14 family. Zinc-binding uS14 subfamily. As to quaternary structure, part of the 30S ribosomal subunit. Contacts proteins S3 and S10. Zn(2+) is required as a cofactor.

In terms of biological role, binds 16S rRNA, required for the assembly of 30S particles and may also be responsible for determining the conformation of the 16S rRNA at the A site. This is Small ribosomal subunit protein uS14 from Thermosipho melanesiensis (strain DSM 12029 / CIP 104789 / BI429).